A 705-amino-acid polypeptide reads, in one-letter code: Gamma-adducin (705 aa).

Over residues 1-10 (MSSDTSQAVI) the composition is skewed to polar residues. The segment at 1 to 22 (MSSDTSQAVITTPPPPSMPHKE) is disordered. An N-acetylserine modification is found at S2. A phosphoserine mark is found at S31, S42, S64, S402, S414, S423, S442, and S461. Disordered stretches follow at residues 472-495 (EDPS…VPLN), 535-556 (PSTM…PFSH), 572-612 (KQQG…EENH), and 658-705 (EITI…KVEA). Residue K484 forms a Glycyl lysine isopeptide (Lys-Gly) (interchain with G-Cter in SUMO2) linkage. A phosphoserine mark is found at S583, S585, S590, S672, S676, S678, and S680. A compositionally biased stretch (low complexity) spans 590-605 (SVSQIQSQTQSPQSVP). The segment covering 681 to 705 (PSKKKKKFRTPSFLKKNKKKEKVEA) has biased composition (basic residues). The residue at position 682 (S682) is a Phosphoserine; by PKC. The tract at residues 683-700 (KKKKKFRTPSFLKKNKKK) is interaction with calmodulin.

This sequence belongs to the aldolase class II family. Adducin subfamily. Heterodimer of an alpha and a gamma subunit. Post-translationally, sumoylated. In terms of processing, proteolytically cleaved by asparagine endopeptidase (AEP) into 2 fragments. Overexpression of the 1-357 fragment induces neuronal apoptosis, and overexpression of either 1-357 or 358-706 fragment increases the degeneration of dendritic spines. Overexpression of the 1-357 fragment impairs neurite outgrowth by downregulating the expression of Rac2, and induces synaptic dysfunction and cognitive impairments in tau P301S transgenic mice, a mouse model for Alzheimer disease (AD). Expressed in kidney, brain, spleen, liver and heart. In terms of tissue distribution, expressed in renal interlobular arteries, afferent/efferent arterioles, parietal glomerular epithelial cells and microvilli of the luminal surface of the proximal tubule (at protein level). Expressed in podocytes (at protein level) Expressed in renal cortex (at protein level). Expressed in primary vascular smooth muscle cells (VSMCs) of the kidney (at protein level). Expressed in tubular cells and glomeruli (at protein level).

It localises to the cytoplasm. Its subcellular location is the cytoskeleton. The protein localises to the cell membrane. Its function is as follows. Membrane-cytoskeleton-associated protein that promotes the assembly of the spectrin-actin network. Plays a role in actin filament capping. Binds to calmodulin. Involved in myogenic reactivity of the renal afferent arteriole (Af-art), renal interlobular arteries and middle cerebral artery (MCA) to increased perfusion pressure. Involved in regulation of potassium channels in the vascular smooth muscle cells (VSMCs) of the Af-art and MCA ex vivo. Involved in regulation of glomerular capillary pressure, glomerular filtration rate (GFR) and glomerular nephrin expression in response to hypertension. Involved in renal blood flow (RBF) autoregulation. Plays a role in podocyte structure and function. Regulates globular monomer actin (G-actin) and filamentous polymer actin (F-actin) ratios in the primary podocytes affecting actin cytoskeleton organization. Regulates expression of synaptopodin, RhoA, Rac1 and CDC42 in the renal cortex and the primary podocytes. Regulates expression of nephrin in the glomeruli and in the primary podocytes, expression of nephrin and podocinin in the renal cortex, and expression of focal adhesion proteins integrin alpha-3 and integrin beta-1 in the glomeruli. Involved in cell migration and cell adhesion of podocytes, and in podocyte foot process effacement. Regulates expression of profibrotics markers MMP2, MMP9, TGF beta-1, tubular tight junction protein E-cadherin, and mesenchymal markers vimentin and alpha-SMA. Promotes the growth of neurites. The protein is Gamma-adducin (Add3) of Rattus norvegicus (Rat).